Consider the following 265-residue polypeptide: Small ribosomal subunit protein uS2 (265 aa).

The segment at 231 to 265 is disordered; the sequence is VEEEYEDYEGSEEDYDYDETEYADSVIPEDGEEAE.

It belongs to the universal ribosomal protein uS2 family.

This chain is Small ribosomal subunit protein uS2, found in Nostoc sp. (strain PCC 7120 / SAG 25.82 / UTEX 2576).